Reading from the N-terminus, the 95-residue chain is Cytosolic calcium-binding protein 3 (95 aa).

A run of 6 repeats spans residues 30 to 35 (VEDAEK), 39 to 43 (DEEEK), 54 to 59 (VEEEKK), 67 to 71 (PEEKK), 75 to 79 (LEEKQ), and 90 to 94 (VEKAK). Residues 30 to 94 (VEDAEKTNED…AEEVAVEKAK (65 aa)) are 6 X 5 AA approximate repeats of V-E-E-K-K. The disordered stretch occupies residues 54–95 (VEEEKKAEEVTETPEEKKTEALEEKQTEVAAAEEVAVEKAKE). Basic and acidic residues predominate over residues 55-80 (EEEKKAEEVTETPEEKKTEALEEKQT).

As to expression, low levels in roots (e.g. in cambium) and barely expressed in stems, shoots, flowers, siliques and leaves.

Its subcellular location is the cytoplasm. It localises to the cytosol. Functionally, binds calcium Ca(2+) and may act as a signal mediator to buffer Ca(2+). This Arabidopsis thaliana (Mouse-ear cress) protein is Cytosolic calcium-binding protein 3.